The primary structure comprises 484 residues: 6-phosphogluconate dehydrogenase, decarboxylating (484 aa).

Residues 11–16 (GLAVMG), 34–36 (NRT), 76–78 (VRA), and Asn-104 contribute to the NADP(+) site. Substrate contacts are provided by residues Asn-104 and 130–132 (SGG). Lys-185 serves as the catalytic Proton acceptor. Residue 188-189 (HN) coordinates substrate. The Proton donor role is filled by Glu-192. The substrate site is built by Tyr-193, Lys-262, Arg-289, Arg-447, and His-453.

The protein belongs to the 6-phosphogluconate dehydrogenase family. Homodimer.

The catalysed reaction is 6-phospho-D-gluconate + NADP(+) = D-ribulose 5-phosphate + CO2 + NADPH. It functions in the pathway carbohydrate degradation; pentose phosphate pathway; D-ribulose 5-phosphate from D-glucose 6-phosphate (oxidative stage): step 3/3. Its function is as follows. Catalyzes the oxidative decarboxylation of 6-phosphogluconate to ribulose 5-phosphate and CO(2), with concomitant reduction of NADP to NADPH. The polypeptide is 6-phosphogluconate dehydrogenase, decarboxylating (Aggregatibacter actinomycetemcomitans (Actinobacillus actinomycetemcomitans)).